We begin with the raw amino-acid sequence, 613 residues long: Spastin (613 aa).

Residues 1–42 are disordered; it reads MNSPGGRGKKKGSAGSSSAPPAAGASPSAPSGPAPPAPPAGA. Residues 1 to 61 are Cytoplasmic-facing; the sequence is MNSPGGRGKK…KRNLYYFSYP (61 aa). Positions 13 to 29 are enriched in low complexity; the sequence is SAGSSSAPPAAGASPSA. Pro residues predominate over residues 30–39; that stretch reads PSGPAPPAPP. The helical intramembrane region spans 62–82; sequence LFAAFALLRFVAFQLGLLVAW. The Cytoplasmic portion of the chain corresponds to 83–613; sequence LCERLSRGAL…WNKDFGDTTV (531 aa). The region spanning 117-192 is the MIT domain; the sequence is HKRAFECISM…AMAKDRLQLL (76 aa). The segment at 224–312 is disordered; the sequence is SESGAVPKKK…PAARKKKDTK (89 aa). 3 stretches are compositionally biased toward polar residues: residues 237 to 257, 264 to 274, and 281 to 299; these read THTS…STGL, PSYSGISTASV, and PATS…NKPS. 379 to 386 is a binding site for ATP; that stretch reads GPPGNGKT.

Belongs to the AAA ATPase family. Spastin subfamily. As to quaternary structure, homohexamer. The homohexamer is stabilized by ATP-binding. The homohexamer may adopt a ring conformation through which microtubules pass prior to being severed. Interacts with microtubules.

Its subcellular location is the membrane. It is found in the cytoplasm. The protein localises to the cytoskeleton. The protein resides in the microtubule organizing center. It localises to the centrosome. Its subcellular location is the perinuclear region. It is found in the nucleus. The enzyme catalyses n ATP + n H2O + a microtubule = n ADP + n phosphate + (n+1) alpha/beta tubulin heterodimers.. Its function is as follows. ATP-dependent microtubule severing protein that specifically recognizes and cuts microtubules that are polyglutamylated. Preferentially recognizes and acts on microtubules decorated with short polyglutamate tails: severing activity increases as the number of glutamates per tubulin rises from one to eight, but decreases beyond this glutamylation threshold. Microtubule severing promotes reorganization of cellular microtubule arrays and the release of microtubules from the centrosome following nucleation. Required for membrane traffic from the endoplasmic reticulum (ER) to the Golgi and for completion of the abscission stage of cytokinesis. Also plays a role in axon growth and the formation of axonal branches. This Gallus gallus (Chicken) protein is Spastin.